The primary structure comprises 220 residues: Ribonuclease HII (220 aa).

Positions 32-220 constitute an RNase H type-2 domain; that stretch reads KHIVGIDEAG…FAPIKGRYSV (189 aa). 3 residues coordinate a divalent metal cation: Asp-38, Glu-39, and Asp-130.

It belongs to the RNase HII family. Mn(2+) serves as cofactor. Requires Mg(2+) as cofactor.

It localises to the cytoplasm. It catalyses the reaction Endonucleolytic cleavage to 5'-phosphomonoester.. Functionally, endonuclease that specifically degrades the RNA of RNA-DNA hybrids. The chain is Ribonuclease HII from Brucella anthropi (strain ATCC 49188 / DSM 6882 / CCUG 24695 / JCM 21032 / LMG 3331 / NBRC 15819 / NCTC 12168 / Alc 37) (Ochrobactrum anthropi).